Reading from the N-terminus, the 271-residue chain is Regulatory protein RecX (271 aa).

Belongs to the RecX family.

The protein resides in the cytoplasm. Its function is as follows. Modulates RecA activity. This chain is Regulatory protein RecX, found in Lactobacillus johnsonii (strain CNCM I-12250 / La1 / NCC 533).